The following is a 453-amino-acid chain: Plasmepsin II (453 aa).

Over 1–37 (MDITVREHDFKHGFIKSNSTFDGLNIDNSKNKKKIQK) the chain is Cytoplasmic. A propeptide spanning residues 1–124 (MDITVREHDF…SGLTKTNYLG (124 aa)) is cleaved from the precursor. A helical; Signal-anchor for type II membrane protein membrane pass occupies residues 38–58 (GFQILYVLLFCSVMCGLFYYV). At 59–453 (YENVWLQRDN…VGIALAKKNL (395 aa)) the chain is on the lumenal side. The 308-residue stretch at 140–447 (FYGDAEVGDN…DYDNHSVGIA (308 aa)) folds into the Peptidase A1 domain. Aspartate 158 is a catalytic residue. Cysteine 171 and cysteine 176 form a disulfide bridge. Aspartate 338 is a catalytic residue. Cysteine 373 and cysteine 409 are joined by a disulfide.

The protein belongs to the peptidase A1 family. Component of the hemozoin formation complex (HFC) composed of falcipains FP2A and/or FP2B, plasmepsins PMII, PMIII/HAP and PMIV, heme detoxifying protein HDP and falcilysin FLN. The HFC complex is involved in hemoglobin degradation and detoxification of heme in the food vacuole during the asexual blood stage. Not N-glycosylated. Post-translationally, proteolytically cleaved into the soluble active mature form in the digestive vacuole by cysteine protease falcipains; the process begins at the early ring stage. Proteolysis requires an acidic environment. In absence of falcipains, autoprocessing may serve as an alternate activation system.

The protein localises to the membrane. It is found in the vacuole lumen. It localises to the vacuole membrane. The enzyme catalyses Hydrolysis of the bonds linking certain hydrophobic residues in hemoglobin or globin. Also cleaves small molecules substrates such as Ala-Leu-Glu-Arg-Thr-Phe-|-Phe(NO2)-Ser-Phe-Pro-Thr.. Its activity is regulated as follows. Inhibited by pepstatin A. In terms of biological role, during the asexual blood stage, participates in initial cleavage of native host hemoglobin (Hb) resulting in Hb denaturation. May cleave preferentially denatured hemoglobin that has been cleaved by PMI. Digestion of host Hb is an essential step which provides the parasite with amino acids for protein synthesis, and regulates osmolarity. The sequence is that of Plasmepsin II from Plasmodium falciparum (isolate HB3).